We begin with the raw amino-acid sequence, 381 residues long: Erythronate-4-phosphate dehydrogenase (381 aa).

Residues Ser-45 and Thr-67 each contribute to the substrate site. Residues 127–128 (QV), Asp-147, and Thr-176 each bind NAD(+). Residue Arg-209 is part of the active site. Asp-233 contributes to the NAD(+) binding site. Residue Glu-238 is part of the active site. The active-site Proton donor is His-255. Gly-258 lines the NAD(+) pocket. Tyr-259 lines the substrate pocket.

This sequence belongs to the D-isomer specific 2-hydroxyacid dehydrogenase family. PdxB subfamily. As to quaternary structure, homodimer.

Its subcellular location is the cytoplasm. It carries out the reaction 4-phospho-D-erythronate + NAD(+) = (R)-3-hydroxy-2-oxo-4-phosphooxybutanoate + NADH + H(+). The protein operates within cofactor biosynthesis; pyridoxine 5'-phosphate biosynthesis; pyridoxine 5'-phosphate from D-erythrose 4-phosphate: step 2/5. Its function is as follows. Catalyzes the oxidation of erythronate-4-phosphate to 3-hydroxy-2-oxo-4-phosphonooxybutanoate. This chain is Erythronate-4-phosphate dehydrogenase, found in Vibrio cholerae serotype O1 (strain ATCC 39315 / El Tor Inaba N16961).